Reading from the N-terminus, the 151-residue chain is D-aminoacyl-tRNA deacylase (151 aa).

Positions 137–138 match the Gly-cisPro motif, important for rejection of L-amino acids motif; it reads GP.

It belongs to the DTD family. Homodimer.

It localises to the cytoplasm. It carries out the reaction glycyl-tRNA(Ala) + H2O = tRNA(Ala) + glycine + H(+). The catalysed reaction is a D-aminoacyl-tRNA + H2O = a tRNA + a D-alpha-amino acid + H(+). Its function is as follows. An aminoacyl-tRNA editing enzyme that deacylates mischarged D-aminoacyl-tRNAs. Also deacylates mischarged glycyl-tRNA(Ala), protecting cells against glycine mischarging by AlaRS. Acts via tRNA-based rather than protein-based catalysis; rejects L-amino acids rather than detecting D-amino acids in the active site. By recycling D-aminoacyl-tRNA to D-amino acids and free tRNA molecules, this enzyme counteracts the toxicity associated with the formation of D-aminoacyl-tRNA entities in vivo and helps enforce protein L-homochirality. The sequence is that of D-aminoacyl-tRNA deacylase from Protochlamydia amoebophila (strain UWE25).